The sequence spans 149 residues: Large ribosomal subunit protein bL9 (149 aa).

This sequence belongs to the bacterial ribosomal protein bL9 family.

In terms of biological role, binds to the 23S rRNA. This chain is Large ribosomal subunit protein bL9, found in Anaeromyxobacter dehalogenans (strain 2CP-C).